The following is a 143-amino-acid chain: MELWAQLKQAGLESSGLGPLPQALRMPPPEGNPGQALMSSGAEFGGARELLLWIWEELGNLRRVDVQLLGQLCDLGLEMGTLREELVTILEEEEEDDDEEEQEEEGEGKNCVEENKGLQGKQGEKCSGNPYPAQRLPDFEMTI.

Residues 90–106 are compositionally biased toward acidic residues; that stretch reads LEEEEEDDDEEEQEEEG. Positions 90–143 are disordered; that stretch reads LEEEEEDDDEEEQEEEGEGKNCVEENKGLQGKQGEKCSGNPYPAQRLPDFEMTI. Residues 107 to 116 are compositionally biased toward basic and acidic residues; sequence EGKNCVEENK.

The sequence is that of Glutamate-rich protein 4 (Erich4) from Rattus norvegicus (Rat).